Reading from the N-terminus, the 143-residue chain is Submaxillary gland androgen-regulated protein 2, isoform gamma (143 aa).

The N-terminal stretch at 1–22 (MKALYMVFVLWVLIGCFLSSEC) is a signal peptide. The segment at 28-50 (GQHDPTRPLSPSNPSSHFYPQPD) is disordered. A compositionally biased stretch (polar residues) spans 36-45 (LSPSNPSSHF).

It is found in the secreted. May play a role in protection or detoxification. The sequence is that of Submaxillary gland androgen-regulated protein 2, isoform gamma (Smr2) from Mus musculus (Mouse).